The sequence spans 1010 residues: 2-oxoglutarate dehydrogenase-like, mitochondrial (1010 aa).

Residues methionine 1–phenylalanine 73 constitute a mitochondrion transit peptide. The Ca(2+) site is built by histidine 130, aspartate 143, and aspartate 145. Positions 299, 398, 431, 433, and 663 each coordinate thiamine diphosphate. Positions 398, 431, and 433 each coordinate Mg(2+).

This sequence belongs to the alpha-ketoglutarate dehydrogenase family. As to quaternary structure, the OGDHC complex comprises multiple copies of three catalytic enzyme components, the 2-oxoglutarate dehydrogenase (OGDH/E1), the dihydrolipoamide dehydrogenase (DLST/E2) and the dihydrolipoamide dehydrogenase (DLD/E3). OGDHL/E1-like isoenzyme may replace OGDH in the OGDHC complex in the brain. The presence of either ODGH/E1 or ODGHL/E1-like isoenzyme in the complex may depend on its tissular distribution. The cofactor is thiamine diphosphate. Mg(2+) serves as cofactor.

The protein localises to the mitochondrion matrix. The catalysed reaction is N(6)-[(R)-lipoyl]-L-lysyl-[protein] + 2-oxoglutarate + H(+) = N(6)-[(R)-S(8)-succinyldihydrolipoyl]-L-lysyl-[protein] + CO2. 2-oxoglutarate dehydrogenase (E1-like) component of the 2-oxoglutarate dehydrogenase multienzyme complex (OGDHC) which mediates the decarboxylation of alpha-ketoglutarate in the tricarboxylic acid cycle. The OGDHC complex catalyzes the overall conversion of 2-oxoglutarate to succinyl-CoA and CO(2) while reducing NAD(+) to NADH. The OGDHC complex is mainly active in the mitochondrion. Involved in the inhibition of cell proliferation and in apoptosis. In Pongo abelii (Sumatran orangutan), this protein is 2-oxoglutarate dehydrogenase-like, mitochondrial (OGDHL).